The sequence spans 347 residues: Tetracycline resistance determinant (347 aa).

8 helical membrane-spanning segments follow: residues 3–20 (VLGA…LIVA), 30–52 (SPAA…PVEL), 73–95 (CSAV…PLFL), 108–130 (LVVI…LIAS), 137–156 (LAIV…ATTG), 161–183 (MWGI…TVIT), 204–226 (CAGQ…AVAL), and 294–316 (GFHI…TWFL). The segment at 321–347 (EETAPEEERPAESGAGAKNGPLPASDA) is disordered.

This sequence belongs to the major facilitator superfamily. TCR/Tet family.

Its subcellular location is the cell membrane. In terms of biological role, resistance to tetracycline by an active tetracycline efflux. This is an energy-dependent process that decreases the accumulation of the antibiotic in whole cells. This protein functions as a metal-tetracycline/H(+) antiporter. In Streptomyces rimosus, this protein is Tetracycline resistance determinant (tetB).